A 509-amino-acid chain; its full sequence is Maturase K (509 aa).

It belongs to the intron maturase 2 family. MatK subfamily.

Its subcellular location is the plastid. It localises to the chloroplast. Its function is as follows. Usually encoded in the trnK tRNA gene intron. Probably assists in splicing its own and other chloroplast group II introns. This is Maturase K from Jacaranda mimosifolia (Jacaranda).